The following is a 102-amino-acid chain: MHPITPVHYLALSAALLLIGTVGVLTRRNIVIILMSIELILNAVNINLIAFSHALQNINGQIFAIFVITDAVAEAAVGLGILIALFRNKETVQADEIDLLKW.

The next 3 helical transmembrane spans lie at 4–24, 30–50, and 62–82; these read ITPV…TVGV, IVII…NLIA, and IFAI…LGIL.

This sequence belongs to the complex I subunit 4L family. In terms of assembly, NDH-1 is composed of 14 different subunits. Subunits NuoA, H, J, K, L, M, N constitute the membrane sector of the complex.

It is found in the cell inner membrane. It carries out the reaction a quinone + NADH + 5 H(+)(in) = a quinol + NAD(+) + 4 H(+)(out). In terms of biological role, NDH-1 shuttles electrons from NADH, via FMN and iron-sulfur (Fe-S) centers, to quinones in the respiratory chain. The immediate electron acceptor for the enzyme in this species is believed to be ubiquinone. Couples the redox reaction to proton translocation (for every two electrons transferred, four hydrogen ions are translocated across the cytoplasmic membrane), and thus conserves the redox energy in a proton gradient. The polypeptide is NADH-quinone oxidoreductase subunit K 2 (Solibacter usitatus (strain Ellin6076)).